The following is a 268-amino-acid chain: Centromere protein Q (268 aa).

Residues 1-80 (MSGKANASKK…KTWQPLSKST (80 aa)) form a disordered region. Phosphoserine occurs at positions 31 and 50. A compositionally biased stretch (basic residues) spans 58–72 (TNLKHGKTAASKRKT). The stretch at 170-206 (ELMTGNIQSLKNKIQILASEVEEEEERVKQMHQINSS) forms a coiled coil. S249 bears the Phosphoserine mark.

Belongs to the CENP-Q/OKP1 family. Component of the CENPA-CAD complex, composed of CENPI, CENPK, CENPL, CENPO, CENPP, CENPQ, CENPR and CENPS. The CENPA-CAD complex interacts with the CENPA-NAC complex, at least composed of CENPA, CENPC, CENPH, CENPM, CENPN, CENPT and CENPU. Phosphorylation at Ser-50 is essential for CENPE recruitment to kinetochores and orderly chromosome congression.

Its subcellular location is the nucleus. It localises to the chromosome. It is found in the centromere. Component of the CENPA-CAD (nucleosome distal) complex, a complex recruited to centromeres which is involved in assembly of kinetochore proteins, mitotic progression and chromosome segregation. May be involved in incorporation of newly synthesized CENPA into centromeres via its interaction with the CENPA-NAC complex. Plays an important role in chromosome congression and in the recruitment of CENP-O complex (which comprises CENPO, CENPP, CENPQ and CENPU), CENPE and PLK1 to the kinetochores. The chain is Centromere protein Q (CENPQ) from Homo sapiens (Human).